The following is a 254-amino-acid chain: Protein Thf1 (254 aa).

Positions 183-217 form a coiled coil; the sequence is SDKLQKDLDLYRSNLEKMEQARITMEEAIQADRRK. Over residues 213–227 the composition is skewed to basic and acidic residues; it reads ADRRKREQREQEKLA. The disordered stretch occupies residues 213 to 254; it reads ADRRKREQREQEKLAKAAAAEAPAALEASSDNPEPETSETPS. Residues 228–240 show a composition bias toward low complexity; the sequence is KAAAAEAPAALEA. The span at 245-254 shows a compositional bias: acidic residues; that stretch reads PEPETSETPS.

The protein belongs to the THF1 family.

In terms of biological role, may be involved in photosynthetic membrane biogenesis. The polypeptide is Protein Thf1 (Synechococcus elongatus (strain ATCC 33912 / PCC 7942 / FACHB-805) (Anacystis nidulans R2)).